Consider the following 1127-residue polypeptide: Caprin-2 (1127 aa).

Positions 67 to 108 are disordered; that stretch reads YQSPSGHSEEEREGNMKSAKPQVNHSQHGESQRALSPLQSTL. A compositionally biased stretch (polar residues) spans 99–108; the sequence is RALSPLQSTL. 2 coiled-coil regions span residues 129–156 and 194–216; these read LKHK…GEHL and AQKK…KLRT. 3 disordered regions span residues 382-614, 642-753, and 922-975; these read NKQG…KDPV, DKPS…SSSV, and QCYK…PVDV. Composition is skewed to basic and acidic residues over residues 402–432 and 440–464; these read KRWD…HQEV and EQRK…EISK. Polar residues-rich tracts occupy residues 512-531 and 544-567; these read PKSW…SWTT and TPKS…QISP. A compositionally biased stretch (basic and acidic residues) spans 588-597; it reads LNTEPKDVPK. Polar residues-rich tracts occupy residues 665–714 and 741–753; these read KEQN…TSET and QGFQ…SSSV. Ser948 and Ser949 each carry phosphoserine. Positions 956-970 are enriched in polar residues; that stretch reads TFNSGDSGQGDSRSM. Residues 993-1127 form the C1q domain; that stretch reads PQQMRVAFSA…TFSGYLLYQD (135 aa). Ca(2+)-binding residues include Asp1078 and Glu1084.

The protein belongs to the caprin family. In terms of assembly, homotrimer; via C1q domain. Found in a complex with LRP6, CCNY and CDK14 during G2/M stage; CAPRIN2 functions as a scaffold for the complex by binding to CCNY via its N terminus and to CDK14 via its C terminus. Interacts with LRP5. Interacts with LRP6. In terms of tissue distribution, detected in all tissues tested with highest levels of expression in brain and spleen.

The protein localises to the cytoplasm. Its subcellular location is the mitochondrion. It is found in the cell membrane. Its function is as follows. Promotes phosphorylation of the Wnt coreceptor LRP6, leading to increased activity of the canonical Wnt signaling pathway. Facilitates constitutive LRP6 phosphorylation by CDK14/CCNY during G2/M stage of the cell cycle, which may potentiate cells for Wnt signaling. May regulate the transport and translation of mRNAs, modulating for instance the expression of proteins involved in synaptic plasticity in neurons. Involved in regulation of growth as erythroblasts shift from a highly proliferative state towards their terminal phase of differentiation. May be involved in apoptosis. This chain is Caprin-2, found in Homo sapiens (Human).